The chain runs to 75 residues: UPF0512 protein D (75 aa).

The segment at 1–20 is disordered; it reads MAIFKSISSISNSTGSMGSS.

Belongs to the UPF0512 family.

The protein is UPF0512 protein D of Dictyostelium discoideum (Social amoeba).